A 192-amino-acid chain; its full sequence is Na(+)-translocating ferredoxin:NAD(+) oxidoreductase complex subunit A (192 aa).

The next 6 membrane-spanning stretches (helical) occupy residues 4–24 (IFIMISAIFVNNFVLSRFLGI), 38–58 (VGMGVAVTFVMALASAITYVV), 71–91 (LQTIAFILIIAALVQLVEMII), 101–121 (ALGVYLPLITTNCAVLGVALI), 133–153 (IFNGVGAALGFTLAIVLFAGI), and 169–189 (FPIALLTAGLMAIAFLGFSGM).

It belongs to the NqrDE/RnfAE family. In terms of assembly, the complex is composed of six subunits: RnfA, RnfB, RnfC, RnfD, RnfE and RnfG.

Its subcellular location is the cell membrane. The catalysed reaction is 2 reduced [2Fe-2S]-[ferredoxin] + Na(+)(in) + NAD(+) + H(+) = 2 oxidized [2Fe-2S]-[ferredoxin] + Na(+)(out) + NADH. Its function is as follows. Part of a membrane-bound complex that couples electron transfer with translocation of ions across the membrane. Couples electron transfer from reduced ferredoxin to NAD(+) with electrogenic movement of Na(+) out of the cell. Involved in caffeate respiration. The protein is Na(+)-translocating ferredoxin:NAD(+) oxidoreductase complex subunit A of Acetobacterium woodii (strain ATCC 29683 / DSM 1030 / JCM 2381 / KCTC 1655 / WB1).